A 490-amino-acid chain; its full sequence is Probable glycine dehydrogenase (decarboxylating) subunit 2 (490 aa).

At lysine 273 the chain carries N6-(pyridoxal phosphate)lysine.

This sequence belongs to the GcvP family. C-terminal subunit subfamily. The glycine cleavage system is composed of four proteins: P, T, L and H. In this organism, the P 'protein' is a heterodimer of two subunits. It depends on pyridoxal 5'-phosphate as a cofactor.

It carries out the reaction N(6)-[(R)-lipoyl]-L-lysyl-[glycine-cleavage complex H protein] + glycine + H(+) = N(6)-[(R)-S(8)-aminomethyldihydrolipoyl]-L-lysyl-[glycine-cleavage complex H protein] + CO2. In terms of biological role, the glycine cleavage system catalyzes the degradation of glycine. The P protein binds the alpha-amino group of glycine through its pyridoxal phosphate cofactor; CO(2) is released and the remaining methylamine moiety is then transferred to the lipoamide cofactor of the H protein. This Staphylococcus aureus (strain MSSA476) protein is Probable glycine dehydrogenase (decarboxylating) subunit 2.